Consider the following 505-residue polypeptide: Protein nucleotidyltransferase YdiU (505 aa).

Gly102, Gly104, Arg105, Lys125, Asp137, Gly138, Arg188, and Arg195 together coordinate ATP. Asp264 acts as the Proton acceptor in catalysis. Mg(2+)-binding residues include Asn265 and Asp274. Asp274 provides a ligand contact to ATP. The disordered stretch occupies residues 485–505; it reads FADYGKPPAPGEEVQQTFCGT.

It belongs to the SELO family. Mg(2+) is required as a cofactor. It depends on Mn(2+) as a cofactor.

The catalysed reaction is L-seryl-[protein] + ATP = 3-O-(5'-adenylyl)-L-seryl-[protein] + diphosphate. It catalyses the reaction L-threonyl-[protein] + ATP = 3-O-(5'-adenylyl)-L-threonyl-[protein] + diphosphate. The enzyme catalyses L-tyrosyl-[protein] + ATP = O-(5'-adenylyl)-L-tyrosyl-[protein] + diphosphate. It carries out the reaction L-histidyl-[protein] + UTP = N(tele)-(5'-uridylyl)-L-histidyl-[protein] + diphosphate. The catalysed reaction is L-seryl-[protein] + UTP = O-(5'-uridylyl)-L-seryl-[protein] + diphosphate. It catalyses the reaction L-tyrosyl-[protein] + UTP = O-(5'-uridylyl)-L-tyrosyl-[protein] + diphosphate. Its function is as follows. Nucleotidyltransferase involved in the post-translational modification of proteins. It can catalyze the addition of adenosine monophosphate (AMP) or uridine monophosphate (UMP) to a protein, resulting in modifications known as AMPylation and UMPylation. The sequence is that of Protein nucleotidyltransferase YdiU from Nitrobacter hamburgensis (strain DSM 10229 / NCIMB 13809 / X14).